The sequence spans 169 residues: 2-C-methyl-D-erythritol 2,4-cyclodiphosphate synthase (169 aa).

A divalent metal cation is bound by residues Asp13 and His15. 4-CDP-2-C-methyl-D-erythritol 2-phosphate contacts are provided by residues 13-15 (DIH) and 40-41 (HS). A divalent metal cation is bound at residue His48. 4-CDP-2-C-methyl-D-erythritol 2-phosphate is bound by residues 62 to 64 (DIG), 138 to 141 (TTNE), and Arg148.

It belongs to the IspF family. In terms of assembly, homotrimer. It depends on a divalent metal cation as a cofactor.

The enzyme catalyses 4-CDP-2-C-methyl-D-erythritol 2-phosphate = 2-C-methyl-D-erythritol 2,4-cyclic diphosphate + CMP. It participates in isoprenoid biosynthesis; isopentenyl diphosphate biosynthesis via DXP pathway; isopentenyl diphosphate from 1-deoxy-D-xylulose 5-phosphate: step 4/6. Its function is as follows. Involved in the biosynthesis of isopentenyl diphosphate (IPP) and dimethylallyl diphosphate (DMAPP), two major building blocks of isoprenoid compounds. Catalyzes the conversion of 4-diphosphocytidyl-2-C-methyl-D-erythritol 2-phosphate (CDP-ME2P) to 2-C-methyl-D-erythritol 2,4-cyclodiphosphate (ME-CPP) with a corresponding release of cytidine 5-monophosphate (CMP). The protein is 2-C-methyl-D-erythritol 2,4-cyclodiphosphate synthase of Akkermansia muciniphila (strain ATCC BAA-835 / DSM 22959 / JCM 33894 / BCRC 81048 / CCUG 64013 / CIP 107961 / Muc).